The chain runs to 318 residues: MKRYLILLIVTGVLLWNVVEVLRFRVEFSGGTFVLKNVQDIFVPLEVRGAKVECSKNFVLEENGVLIKQVRPGETVTLHFESGGIFRVKKELKIEARASEEDSDGDGYPDSLELDSEDSERFRNWFVWIALSAFKNDPLLWPKEERDCSGFVRYCAREALKKHTGSWFSLSGYNGPVWEDVEKYNYPNLPLVGTKMFRIEKGAYRGVEDFSNFAVARILVECSMEFVTKSVSEALPGDIAVFFHPEDVEMPYHLMIFVGNLNLADHEGWFVYHTGPIGENPGELRFVRYSELVNYDPSWAPLEINPYFLGFYRFRFLK.

To E.coli YfaT and P.aeruginosa PA4490.

This is an uncharacterized protein from Thermotoga maritima (strain ATCC 43589 / DSM 3109 / JCM 10099 / NBRC 100826 / MSB8).